Here is a 1165-residue protein sequence, read N- to C-terminus: uncharacterized protein (1165 aa).

Residues 422 to 442 (EAAPPRPPRKSKAPEPTGDKA) are disordered.

This is an uncharacterized protein from Frog virus 3 (isolate Goorha) (FV-3).